The primary structure comprises 265 residues: Hydroxyethylthiazole kinase (265 aa).

M43 provides a ligand contact to substrate. Positions 119 and 165 each coordinate ATP. Residue A192 participates in substrate binding.

It belongs to the Thz kinase family. Mg(2+) is required as a cofactor.

The enzyme catalyses 5-(2-hydroxyethyl)-4-methylthiazole + ATP = 4-methyl-5-(2-phosphooxyethyl)-thiazole + ADP + H(+). The protein operates within cofactor biosynthesis; thiamine diphosphate biosynthesis; 4-methyl-5-(2-phosphoethyl)-thiazole from 5-(2-hydroxyethyl)-4-methylthiazole: step 1/1. In terms of biological role, catalyzes the phosphorylation of the hydroxyl group of 4-methyl-5-beta-hydroxyethylthiazole (THZ). This chain is Hydroxyethylthiazole kinase, found in Haemophilus influenzae (strain 86-028NP).